Consider the following 327-residue polypeptide: Probable cell division protein WhiA (327 aa).

The segment at residues 277 to 310 is a DNA-binding region (H-T-H motif); sequence EELGRLADPPMTKDAVAGRIRRLLSMADRKAKQD. The interval 304-327 is disordered; the sequence is DRKAKQDGIPDTESAVTPDLLEDA.

Belongs to the WhiA family.

Functionally, involved in cell division and chromosome segregation. The protein is Probable cell division protein WhiA of Mycolicibacterium vanbaalenii (strain DSM 7251 / JCM 13017 / BCRC 16820 / KCTC 9966 / NRRL B-24157 / PYR-1) (Mycobacterium vanbaalenii).